Consider the following 495-residue polypeptide: Histidine--tRNA ligase (495 aa).

This sequence belongs to the class-II aminoacyl-tRNA synthetase family. As to quaternary structure, homodimer.

It localises to the cytoplasm. The catalysed reaction is tRNA(His) + L-histidine + ATP = L-histidyl-tRNA(His) + AMP + diphosphate + H(+). In Bartonella henselae (strain ATCC 49882 / DSM 28221 / CCUG 30454 / Houston 1) (Rochalimaea henselae), this protein is Histidine--tRNA ligase.